Consider the following 250-residue polypeptide: L-ascorbate peroxidase 1, cytosolic (250 aa).

H42 functions as the Proton acceptor in the catalytic mechanism. The disordered stretch occupies residues 113-137; that stretch reads VPFHPGREDKPAPPPEGRLPDATKG. Position 163 (H163) interacts with heme b. 4 residues coordinate K(+): T164, T180, N182, and D187.

This sequence belongs to the peroxidase family. Ascorbate peroxidase subfamily. Heme b serves as cofactor.

It is found in the cytoplasm. The enzyme catalyses L-ascorbate + H2O2 = L-dehydroascorbate + 2 H2O. Its function is as follows. Plays a key role in hydrogen peroxide removal. This chain is L-ascorbate peroxidase 1, cytosolic (APX1), found in Oryza sativa subsp. indica (Rice).